The following is a 499-amino-acid chain: Glutathione reductase, cytosolic (499 aa).

Positions 35, 36, 55, 72, 73, and 81 each coordinate FAD. Ser35 is a binding site for glutathione. The cysteines at positions 73 and 78 are disulfide-linked. A glutathione-binding site is contributed by Tyr130. Position 146 (Gly146) interacts with FAD. Residues Gly211, Ile214, Glu217, Arg234, Arg240, and Gly297 each coordinate NADP(+). 2 residues coordinate FAD: Asp338 and Thr346. An NADP(+)-binding site is contributed by Ala376. His472 lines the FAD pocket. The active-site Proton acceptor is the His472.

Belongs to the class-I pyridine nucleotide-disulfide oxidoreductase family. As to quaternary structure, homodimer. The cofactor is FAD.

Its subcellular location is the cytoplasm. The catalysed reaction is 2 glutathione + NADP(+) = glutathione disulfide + NADPH + H(+). Its function is as follows. Catalyzes the reduction of glutathione disulfide (GSSG) to reduced glutathione (GSH). Constitutes the major mechanism to maintain a high GSH:GSSG ratio in the cytosol. In Arabidopsis thaliana (Mouse-ear cress), this protein is Glutathione reductase, cytosolic.